The sequence spans 225 residues: Single-pass membrane and coiled-coil domain-containing protein 3 (225 aa).

Residues 62-92 (IKENCDLIIQAIMKIQKELQKVDEALKDKLE) are a coiled coil. Residues 155-175 (IGASLLGSIGVAVLGLGIDMI) form a helical membrane-spanning segment. A coiled-coil region spans residues 183 to 207 (VEKTQLQAAIKSYEKHLVEFKSASE).

It is found in the membrane. The protein is Single-pass membrane and coiled-coil domain-containing protein 3 (SMCO3) of Homo sapiens (Human).